A 141-amino-acid polypeptide reads, in one-letter code: Large ribosomal subunit protein uL16 (141 aa).

It belongs to the universal ribosomal protein uL16 family. Part of the 50S ribosomal subunit.

Functionally, binds 23S rRNA and is also seen to make contacts with the A and possibly P site tRNAs. The polypeptide is Large ribosomal subunit protein uL16 (Geobacillus thermodenitrificans (strain NG80-2)).